The sequence spans 122 residues: Large ribosomal subunit protein uL14 (122 aa).

Belongs to the universal ribosomal protein uL14 family. As to quaternary structure, part of the 50S ribosomal subunit. Forms a cluster with proteins L3 and L19. In the 70S ribosome, L14 and L19 interact and together make contacts with the 16S rRNA in bridges B5 and B8.

In terms of biological role, binds to 23S rRNA. Forms part of two intersubunit bridges in the 70S ribosome. The protein is Large ribosomal subunit protein uL14 of Mycoplasma mobile (strain ATCC 43663 / 163K / NCTC 11711) (Mesomycoplasma mobile).